We begin with the raw amino-acid sequence, 201 residues long: Testis-expressed protein 38 (201 aa).

The chain crosses the membrane as a helical span at residues 3–23 (ISLCIGFLGLCSVLIGSCILF).

It localises to the membrane. This chain is Testis-expressed protein 38 (Tex38), found in Mus musculus (Mouse).